Consider the following 438-residue polypeptide: Trigger factor (438 aa).

One can recognise a PPIase FKBP-type domain in the interval 160–245 (DDKVTIDFVG…VKKIQQAELP (86 aa)).

It belongs to the FKBP-type PPIase family. Tig subfamily.

The protein resides in the cytoplasm. It carries out the reaction [protein]-peptidylproline (omega=180) = [protein]-peptidylproline (omega=0). Functionally, involved in protein export. Acts as a chaperone by maintaining the newly synthesized protein in an open conformation. Functions as a peptidyl-prolyl cis-trans isomerase. This Francisella tularensis subsp. holarctica (strain LVS) protein is Trigger factor.